The sequence spans 351 residues: Pentatricopeptide repeat-containing protein At3g56030, mitochondrial (351 aa).

Residues 1-41 (MFRLKPLISVDLNQTMSLLRRFVKEANNSRFLLQSISGRSF) constitute a mitochondrion transit peptide. 4 PPR repeats span residues 124–158 (RKHS…EFGL), 159–193 (STCV…AIPV), 194–224 (DVTS…MEEE), and 232–266 (DTRT…GLSV).

The protein belongs to the PPR family. P subfamily.

The protein resides in the mitochondrion. In Arabidopsis thaliana (Mouse-ear cress), this protein is Pentatricopeptide repeat-containing protein At3g56030, mitochondrial.